We begin with the raw amino-acid sequence, 285 residues long: GTP cyclohydrolase 1 type 2 homolog (285 aa).

A divalent metal cation-binding residues include histidine 65, histidine 66, aspartate 104, histidine 230, and glutamate 234.

Belongs to the GTP cyclohydrolase I type 2/NIF3 family. Homohexamer.

The polypeptide is GTP cyclohydrolase 1 type 2 homolog (Streptomyces coelicolor (strain ATCC BAA-471 / A3(2) / M145)).